The following is a 63-amino-acid chain: Large ribosomal subunit protein bL32 (63 aa).

A disordered region spans residues 1 to 22 (MANPKAKMSKSRRDKRRAQFNA). Residues 7–18 (KMSKSRRDKRRA) are compositionally biased toward basic residues.

Belongs to the bacterial ribosomal protein bL32 family.

The polypeptide is Large ribosomal subunit protein bL32 (Chlorobium limicola (strain DSM 245 / NBRC 103803 / 6330)).